Here is a 160-residue protein sequence, read N- to C-terminus: Transcription elongation factor GreA (160 aa).

Positions 49-75 (SEYDEAKNDQAFTEGKILQLENKLKNA) form a coiled coil.

This sequence belongs to the GreA/GreB family.

Functionally, necessary for efficient RNA polymerase transcription elongation past template-encoded arresting sites. The arresting sites in DNA have the property of trapping a certain fraction of elongating RNA polymerases that pass through, resulting in locked ternary complexes. Cleavage of the nascent transcript by cleavage factors such as GreA or GreB allows the resumption of elongation from the new 3'terminus. GreA releases sequences of 2 to 3 nucleotides. The protein is Transcription elongation factor GreA of Clostridium botulinum (strain Eklund 17B / Type B).